Here is a 312-residue protein sequence, read N- to C-terminus: tRNA uridine(34) hydroxylase (312 aa).

One can recognise a Rhodanese domain in the interval 145-235; sequence ENKNSVLVDM…GIIKYVRDAR (91 aa). Cysteine 199 acts as the Cysteine persulfide intermediate in catalysis.

The protein belongs to the TrhO family.

The catalysed reaction is uridine(34) in tRNA + AH2 + O2 = 5-hydroxyuridine(34) in tRNA + A + H2O. Its function is as follows. Catalyzes oxygen-dependent 5-hydroxyuridine (ho5U) modification at position 34 in tRNAs. The sequence is that of tRNA uridine(34) hydroxylase from Buchnera aphidicola subsp. Baizongia pistaciae (strain Bp).